The primary structure comprises 317 residues: E3 ubiquitin-protein ligase NRDP1 (317 aa).

An RING-type; degenerate zinc finger spans residues 18 to 57 (CPICSGVLEEPVQAPHCEHAFCNACITQWFSQQQTCPVDR). The stretch at 135–175 (IKHLRSVVQQQQIRIGELEKTAAESKHQLSEQKRDIQLLKA) forms a coiled coil.

The catalysed reaction is S-ubiquitinyl-[E2 ubiquitin-conjugating enzyme]-L-cysteine + [acceptor protein]-L-lysine = [E2 ubiquitin-conjugating enzyme]-L-cysteine + N(6)-ubiquitinyl-[acceptor protein]-L-lysine.. Its pathway is protein modification; protein ubiquitination. Functionally, acts as E3 ubiquitin-protein ligase and regulates the degradation of target proteins. This is E3 ubiquitin-protein ligase NRDP1 (rnf41) from Xenopus laevis (African clawed frog).